The chain runs to 198 residues: ATP synthase protein MI25 (198 aa).

The chain crosses the membrane as a helical span at residues 29-49; it reads ISIYNEEMIVALCFIGFIIFS.

Belongs to the ATPase protein MI25 family. In terms of assembly, F-type ATPases have 2 components, CF(1) - the catalytic core - and CF(0) - the membrane proton channel. CF(1) has five subunits: alpha(3), beta(3), gamma(1), delta(1), epsilon(1). CF(0) has three main subunits: a, b and c.

The protein resides in the mitochondrion membrane. This is one of the chains of the nonenzymatic component (CF(0) subunit) of the mitochondrial ATPase complex. The chain is ATP synthase protein MI25 from Nicotiana tabacum (Common tobacco).